A 524-amino-acid polypeptide reads, in one-letter code: Serine/threonine-protein kinase PAK 2 (524 aa).

A disordered region spans residues 1 to 81 (MSDNGELEDK…PEISPPSDFE (81 aa)). Residue Ser-2 is modified to N-acetylserine. Residues Ser-2, Ser-20, Ser-55, and Ser-58 each carry the phosphoserine modification. Thr-60 carries the post-translational modification Phosphothreonine. Lys-62 carries the N6-acetyllysine modification. Ser-64 is modified (phosphoserine). The span at 67 to 81 (KEKERPEISPPSDFE) shows a compositional bias: basic and acidic residues. The GTPase-binding stretch occupies residues 69–112 (KERPEISPPSDFEHTIHVGFDAVTGEFTGMPEQWARLLQTSNIT). The tract at residues 69–137 (KERPEISPPS…KFYDSNTVKQ (69 aa)) is autoregulatory region. Residues 74–87 (ISPPSDFEHTIHVG) enclose the CRIB domain. An N6-acetyllysine modification is found at Lys-128. Thr-134 carries the phosphothreonine modification. Tyr-139 bears the Phosphotyrosine mark. Ser-141 is subject to Phosphoserine. The segment at 142 to 188 (FTPPEKDGFPSGTPALNTKGSETSAVVTEEDDDDEDAAPPVIAPRPD) is disordered. At Thr-143 the chain carries Phosphothreonine. At Ser-152 the chain carries Phosphoserine. Thr-154, Thr-159, and Thr-169 each carry phosphothreonine. Residues 155–167 (PALNTKGSETSAV) are compositionally biased toward polar residues. A compositionally biased stretch (acidic residues) spans 169 to 178 (TEEDDDDEDA). At Ser-197 the chain carries Phosphoserine. The tract at residues 204–228 (APVGDSNVDSGAKSSDKQKKKAKMT) is disordered. Positions 245–251 (PKKKYTR) match the Nuclear localization signal motif. The Protein kinase domain occupies 249–499 (YTRYEKIGQG…SAKELLQHPF (251 aa)). ATP-binding positions include 255 to 263 (IGQGASGTV) and Lys-278. Residue Arg-367 is the Proton acceptor of the active site. The residue at position 402 (Thr-402) is a Phosphothreonine; by autocatalysis.

It belongs to the protein kinase superfamily. STE Ser/Thr protein kinase family. STE20 subfamily. In terms of assembly, interacts tightly with GTP-bound but not GDP-bound CDC42/p21 and RAC1. Interacts with SH3MD4. Interacts with SCRIB. Interacts with ARHGEF7 and GIT1. PAK-2p34 interacts with ARHGAP10. Interacts with RAC1. Full-length PAK2 is autophosphorylated when activated by CDC42/p21. Following cleavage, both peptides, PAK-2p27 and PAK-2p34, become highly autophosphorylated. Autophosphorylation of PAK-2p27 can occur in the absence of any effectors and is dependent on phosphorylation of Thr-402, because PAK-2p27 is acting as an exogenous substrate. In terms of processing, during apoptosis proteolytically cleaved by caspase-3 or caspase-3-like proteases to yield active PAK-2p34. Post-translationally, ubiquitinated, leading to its proteasomal degradation.

It localises to the cytoplasm. The protein localises to the nucleus. Its subcellular location is the perinuclear region. The protein resides in the membrane. The catalysed reaction is L-seryl-[protein] + ATP = O-phospho-L-seryl-[protein] + ADP + H(+). The enzyme catalyses L-threonyl-[protein] + ATP = O-phospho-L-threonyl-[protein] + ADP + H(+). With respect to regulation, activated by binding small G proteins. Binding of GTP-bound CDC42 or RAC1 to the autoregulatory region releases monomers from the autoinhibited dimer, enables phosphorylation of Thr-402 and allows the kinase domain to adopt an active structure. Following caspase cleavage, autophosphorylated PAK-2p34 is constitutively active. Its function is as follows. Serine/threonine protein kinase that plays a role in a variety of different signaling pathways including cytoskeleton regulation, cell motility, cell cycle progression, apoptosis or proliferation. Acts as a downstream effector of the small GTPases CDC42 and RAC1. Activation by the binding of active CDC42 and RAC1 results in a conformational change and a subsequent autophosphorylation on several serine and/or threonine residues. Full-length PAK2 stimulates cell survival and cell growth. Phosphorylates MAPK4 and MAPK6 and activates the downstream target MAPKAPK5, a regulator of F-actin polymerization and cell migration. Phosphorylates JUN and plays an important role in EGF-induced cell proliferation. Phosphorylates many other substrates including histone H4 to promote assembly of H3.3 and H4 into nucleosomes, BAD, ribosomal protein S6, or MBP. Phosphorylates CASP7, thereby preventing its activity. Additionally, associates with ARHGEF7 and GIT1 to perform kinase-independent functions such as spindle orientation control during mitosis. On the other hand, apoptotic stimuli such as DNA damage lead to caspase-mediated cleavage of PAK2, generating PAK-2p34, an active p34 fragment that translocates to the nucleus and promotes cellular apoptosis involving the JNK signaling pathway. Caspase-activated PAK2 phosphorylates MKNK1 and reduces cellular translation. The chain is Serine/threonine-protein kinase PAK 2 (Pak2) from Mus musculus (Mouse).